The primary structure comprises 121 residues: MACETERTPLGVFKCQLCALTAPYSYQGRQPPDSQSVVLLEESYVMRDPFTPDKGRFLVVGSRCSMCGRLVCVGPECSLFYSKRFCLPCVQDNVDAFPQEIQQDLEKRKVPFTRPASQRSS.

It belongs to the CDPF1 family.

The protein is Cysteine-rich DPF motif domain-containing protein 1 (CDPF1) of Bos taurus (Bovine).